The chain runs to 37 residues: Esculentin-2JDa (37 aa).

A disulfide bridge connects residues C31 and C37.

As to expression, expressed by the skin glands.

Its subcellular location is the secreted. In terms of biological role, has antibacterial activity against E.coli and S.aureus strains. The protein is Esculentin-2JDa of Odorrana jingdongensis (Jingdong frog).